A 195-amino-acid chain; its full sequence is Thymidine kinase (195 aa).

ATP contacts are provided by residues 8-15 and 86-89; these read GLMGSGKS and DESQ. Catalysis depends on E87, which acts as the Proton acceptor. Positions 146, 151, 184, and 187 each coordinate Zn(2+).

The protein belongs to the thymidine kinase family. As to quaternary structure, homotetramer.

It localises to the cytoplasm. The enzyme catalyses thymidine + ATP = dTMP + ADP + H(+). The sequence is that of Thymidine kinase (tdk) from Bacillus subtilis subsp. natto.